The following is a 145-amino-acid chain: Large-conductance mechanosensitive channel (145 aa).

Transmembrane regions (helical) follow at residues 14–34 and 83–103; these read VIDLAVGIIIGAAFTAIVNSL and GAFLSAVINFLIIAWAVFLLV.

It belongs to the MscL family. In terms of assembly, homopentamer.

It localises to the cell inner membrane. In terms of biological role, channel that opens in response to stretch forces in the membrane lipid bilayer. May participate in the regulation of osmotic pressure changes within the cell. This chain is Large-conductance mechanosensitive channel, found in Paracoccus denitrificans (strain Pd 1222).